The chain runs to 269 residues: Shikimate dehydrogenase (NADP(+)) (269 aa).

Shikimate contacts are provided by residues 17–19 (SKS) and T64. The Proton acceptor role is filled by K68. E80 provides a ligand contact to NADP(+). Residues N89 and D105 each coordinate shikimate. NADP(+) is bound by residues 130–134 (GAGGA), 154–159 (NRTHAK), and M213. Y215 lines the shikimate pocket. G237 provides a ligand contact to NADP(+).

It belongs to the shikimate dehydrogenase family. Homodimer.

It catalyses the reaction shikimate + NADP(+) = 3-dehydroshikimate + NADPH + H(+). Its pathway is metabolic intermediate biosynthesis; chorismate biosynthesis; chorismate from D-erythrose 4-phosphate and phosphoenolpyruvate: step 4/7. Its function is as follows. Involved in the biosynthesis of the chorismate, which leads to the biosynthesis of aromatic amino acids. Catalyzes the reversible NADPH linked reduction of 3-dehydroshikimate (DHSA) to yield shikimate (SA). The sequence is that of Shikimate dehydrogenase (NADP(+)) from Neisseria flavescens.